The sequence spans 497 residues: Dihydrolipoyl dehydrogenase (497 aa).

FAD contacts are provided by residues 60-69, lysine 78, glycine 142, and 170-172; these read EKEPSLGGTC and TGS. An intrachain disulfide couples cysteine 69 to cysteine 74. Residues 207-214, glutamate 230, valine 264, and glycine 302 each bind NAD(+); that span reads GAGVIGLE. FAD contacts are provided by residues aspartate 343 and 349-352; that span reads MLAH. The active-site Proton acceptor is histidine 475.

It belongs to the class-I pyridine nucleotide-disulfide oxidoreductase family. As to quaternary structure, homodimer. The cofactor is FAD.

The protein localises to the cytoplasm. The enzyme catalyses N(6)-[(R)-dihydrolipoyl]-L-lysyl-[protein] + NAD(+) = N(6)-[(R)-lipoyl]-L-lysyl-[protein] + NADH + H(+). This Manduca sexta (Tobacco hawkmoth) protein is Dihydrolipoyl dehydrogenase.